Here is a 177-residue protein sequence, read N- to C-terminus: Putative thioredoxin peroxidase (177 aa).

The Thioredoxin domain maps to 1 to 158; sequence MFPKTLTDSK…IIRLIDAITF (158 aa). The active-site Cysteine sulfenic acid (-SOH) intermediate is the Cys-45.

This sequence belongs to the peroxiredoxin family. AhpC/Prx1 subfamily. Homodimer; disulfide-linked, upon oxidation.

It carries out the reaction a hydroperoxide + [thioredoxin]-dithiol = an alcohol + [thioredoxin]-disulfide + H2O. In terms of biological role, thiol-specific peroxidase that catalyzes the reduction of hydrogen peroxide and organic hydroperoxides to water and alcohols, respectively. Plays a role in cell protection against oxidative stress by detoxifying peroxides and as sensor of hydrogen peroxide-mediated signaling events. In Encephalitozoon cuniculi (strain GB-M1) (Microsporidian parasite), this protein is Putative thioredoxin peroxidase.